The chain runs to 722 residues: MTMFKKAVKSFQWGTYQVTMETGEIARQAGGAVIVNVDDTVVMGTVVASKSAKPGQSFFPLTVDYLEKTYAAGKIPGGFFRREGRPSEGETLISRLIDRPLRPLFPEGFLNEVQVVVHVLSINPDVPSDIPALIAASAALAVSSIPFAGPVGAARVGYANGQYLLNPTRTEQATSELDLIVAGTQAAVLMVESEANQLSEEVMLGAVVYGHDQMQTAINAINDLVCEAGKPEWDWTAAPKDEPFIAKVTALAEAPLREAYQIRQKGARSDKLKEISKEVMAKLSEEGDVDAVAVSDIMFEIEAKIVRSQILNGEPRIDGRDTRTVRPIEIRNGVLPRTHGSALFTRGETQALVVATLGTARDEQIIDVLEGEYRDRFMFHYNMPPFATGETGRVGSPKRREIGHGRLAKRALIPVLPSAEDFAYSIRVVSEITESNGSSSMASVCGGCLAMMDAGVPVKAHVAGVAMGLILDGNRFAVLTDILGDEDHLGDMDFKVAGTANGITALQMDIKVQGITKEIMQVALAQAKEGRLHILSKMQEAMGSVRTELSAHAPRMVSFKIHPDKIREVIGKGGATIQALTKETGCSIDIKDDGTVTIASTSAEGMAEAKARIEGITAEAEVGKIYEGPVVKLLEFGALVNILPGKDGLLHISEISNERVKEVKDYLAEGQVVRVKLLAADERGRLRLSLKAAMADEGGTIAPLAGAAEVATEAAPATGESA.

The Mg(2+) site is built by Asp487 and Asp493. The KH domain maps to 554 to 613 (PRMVSFKIHPDKIREVIGKGGATIQALTKETGCSIDIKDDGTVTIASTSAEGMAEAKARI). The S1 motif domain maps to 623–691 (GKIYEGPVVK…ERGRLRLSLK (69 aa)).

Belongs to the polyribonucleotide nucleotidyltransferase family. The cofactor is Mg(2+).

It is found in the cytoplasm. The catalysed reaction is RNA(n+1) + phosphate = RNA(n) + a ribonucleoside 5'-diphosphate. Its function is as follows. Involved in mRNA degradation. Catalyzes the phosphorolysis of single-stranded polyribonucleotides processively in the 3'- to 5'-direction. This chain is Polyribonucleotide nucleotidyltransferase, found in Polynucleobacter necessarius subsp. necessarius (strain STIR1).